A 477-amino-acid polypeptide reads, in one-letter code: Adenosylhomocysteinase (477 aa).

T63, D142, and E202 together coordinate substrate. Residue 203–205 coordinates NAD(+); the sequence is TTT. Substrate is bound by residues K232 and D236. NAD(+) is bound by residues N237, 266-271, E289, N324, 345-347, and N390; these read GYGDVG and IGH.

Belongs to the adenosylhomocysteinase family. NAD(+) is required as a cofactor.

The protein localises to the cytoplasm. It carries out the reaction S-adenosyl-L-homocysteine + H2O = L-homocysteine + adenosine. The protein operates within amino-acid biosynthesis; L-homocysteine biosynthesis; L-homocysteine from S-adenosyl-L-homocysteine: step 1/1. In terms of biological role, may play a key role in the regulation of the intracellular concentration of adenosylhomocysteine. The chain is Adenosylhomocysteinase from Leptothrix cholodnii (strain ATCC 51168 / LMG 8142 / SP-6) (Leptothrix discophora (strain SP-6)).